The primary structure comprises 359 residues: snRNA-activating protein complex subunit 2 (359 aa).

A compositionally biased stretch (basic residues) spans 1-11 (MKPPQRRRRVP). 3 disordered regions span residues 1–22 (MKPPQRRRRVPARYVGEATGPT), 157–221 (NQDG…GSST), and 291–327 (TALPGEKRPRPGTEDGGTGSTGPEEPDQASPQASEPI).

As to quaternary structure, part of the SNAPc complex composed of 5 subunits: SNAPC1, SNAPC2, SNAPC3, SNAPC4 and SNAPC5. SNAPC2 interacts with TBP and SNAPC4.

The protein localises to the nucleus. Its function is as follows. Part of the SNAPc complex required for the transcription of both RNA polymerase II and III small-nuclear RNA genes. Binds to the proximal sequence element (PSE), a non-TATA-box basal promoter element common to these 2 types of genes. Recruits TBP and BRF2 to the U6 snRNA TATA box. This Mus musculus (Mouse) protein is snRNA-activating protein complex subunit 2 (Snapc2).